We begin with the raw amino-acid sequence, 307 residues long: Sesquiterpene synthase-like protein Agr10 (307 aa).

Residues glycine 287 to arginine 307 are disordered. The span at glutamate 296–arginine 307 shows a compositional bias: polar residues.

This sequence belongs to the terpene synthase family.

The sequence is that of Sesquiterpene synthase-like protein Agr10 from Cyclocybe aegerita (Black poplar mushroom).